The sequence spans 457 residues: L-asparaginase-like protein GA18140 (457 aa).

The signal sequence occupies residues 1–20; the sequence is MRYLCRAQLLSLLLLPLLKA. Cystine bridges form between C72/C78, C172/C188, and C327/C354.

Belongs to the Ntn-hydrolase family.

The protein is L-asparaginase-like protein GA18140 of Drosophila pseudoobscura pseudoobscura (Fruit fly).